We begin with the raw amino-acid sequence, 124 residues long: UPF0382 membrane protein HI_1073 (124 aa).

The next 3 helical transmembrane spans lie at 6–26, 70–90, and 95–115; these read LTLV…AAHG, SMSS…ALAF, and VIVW…ISLA.

It belongs to the UPF0382 family.

Its subcellular location is the cell membrane. The protein is UPF0382 membrane protein HI_1073 of Haemophilus influenzae (strain ATCC 51907 / DSM 11121 / KW20 / Rd).